We begin with the raw amino-acid sequence, 87 residues long: Putative defensin-like protein 238 (87 aa).

Positions 1–23 (MRSITWFIVFCVFMFIALNHVKG) are cleaved as a signal peptide. 4 disulfide bridges follow: Cys30–Cys87, Cys40–Cys65, Cys48–Cys78, and Cys63–Cys80.

It belongs to the DEFL family.

It localises to the secreted. The chain is Putative defensin-like protein 238 (SCRL16) from Arabidopsis thaliana (Mouse-ear cress).